The sequence spans 682 residues: Protein SYG1 homolog (682 aa).

Residues 1–219 enclose the SPX domain; sequence MKFGKVIEGQ…HTDLQGFWVD (219 aa). At 1-274 the chain is on the cytoplasmic side; sequence MKFGKVIEGQ…KEHFSANSMR (274 aa). A helical membrane pass occupies residues 275–295; it reads FGLLFGAGLPLAIEAACYYNA. Residues 296–300 are Extracellular-facing; that stretch reads TEQSS. A helical membrane pass occupies residues 301-321; the sequence is YLLQIWGGFFLVIFAFVLFDL. The Cytoplasmic segment spans residues 322 to 348; sequence DCYVWEKTRVNYMLIFEFNQRKSLNWR. A helical transmembrane segment spans residues 349–369; the sequence is QHLEIVGAVFFIFSLFFFLCM. Residues 370-377 lie on the Extracellular side of the membrane; the sequence is RNFFPGFT. Residues 378 to 398 form a helical membrane-spanning segment; the sequence is IYFPALFLGVVGTFLIAPVIV. At 399–406 the chain is on the cytoplasmic side; it reads PYWRMRRY. A helical transmembrane segment spans residues 407 to 424; sequence LIIQLIRVFLSGLSTVHF. Residues 425 to 426 lie on the Extracellular side of the membrane; that stretch reads QD. The chain crosses the membrane as a helical span at residues 427-447; sequence FFFADQMVSLTYACGNISLFF. Residues 448–525 are Cytoplasmic-facing; that stretch reads CLYKRLWRQP…WRIHPGLKYR (78 aa). Residues 459 to 654 enclose the EXS domain; that stretch reads LCNSSHSPLL…VKPHSDVFVS (196 aa). A helical transmembrane segment spans residues 526–546; sequence VLYTIFAGVNSLFSYTWDILM. The Extracellular portion of the chain corresponds to 547–571; it reads DWNLLVRKDGRWQFREHRILKQLWP. Residues 572–592 form a helical membrane-spanning segment; the sequence is YIIAMILNFIVRSSFIFYCIF. The Cytoplasmic segment spans residues 593-682; it reads PNHIQHSSGI…QTDVDEAQFS (90 aa). Residues 659 to 682 form a disordered region; it reads SDKNYTDDEDSMDDQTDVDEAQFS. The span at 665-682 shows a compositional bias: acidic residues; it reads DDEDSMDDQTDVDEAQFS.

It belongs to the SYG1 (TC 2.A.94) family.

The protein resides in the cell membrane. Functionally, may function in G-protein coupled signal transduction. The protein is Protein SYG1 homolog of Schizosaccharomyces pombe (strain 972 / ATCC 24843) (Fission yeast).